Consider the following 145-residue polypeptide: Bacilliredoxin GK2368 (145 aa).

The protein belongs to the bacilliredoxin family.

The polypeptide is Bacilliredoxin GK2368 (Geobacillus kaustophilus (strain HTA426)).